Reading from the N-terminus, the 64-residue chain is Disintegrin CV-11-beta (64 aa).

A Disintegrin domain is found at 1–64; the sequence is NSAHPCCDPV…SDCPRNPWKD (64 aa). Cystine bridges form between cysteine 6–cysteine 29, cysteine 20–cysteine 26, cysteine 25–cysteine 50, and cysteine 38–cysteine 57. The Cell attachment site signature appears at 42 to 44; the sequence is RGD.

It belongs to the disintegrin family. Dimeric disintegrin subfamily. Heterodimer with subunit alpha; disulfide-linked. As to expression, expressed by the venom gland.

The protein localises to the secreted. Inhibits ADP-induced human platelet aggregation. Antagonist of alpha-IIb/beta-3 (ITGA2B/ITGB3). The polypeptide is Disintegrin CV-11-beta (Cerastes vipera (Sahara sand viper)).